Consider the following 200-residue polypeptide: Dephospho-CoA kinase (200 aa).

The DPCK domain maps to 3–200 (VLGLTGSIGM…LSGKPAAATR (198 aa)). Residue 11–16 (GMGKTT) participates in ATP binding.

The protein belongs to the CoaE family.

It is found in the cytoplasm. It catalyses the reaction 3'-dephospho-CoA + ATP = ADP + CoA + H(+). Its pathway is cofactor biosynthesis; coenzyme A biosynthesis; CoA from (R)-pantothenate: step 5/5. Functionally, catalyzes the phosphorylation of the 3'-hydroxyl group of dephosphocoenzyme A to form coenzyme A. The polypeptide is Dephospho-CoA kinase (Brucella melitensis biotype 1 (strain ATCC 23456 / CCUG 17765 / NCTC 10094 / 16M)).